A 373-amino-acid chain; its full sequence is UDP-N-acetylenolpyruvoylglucosamine reductase (373 aa).

The region spanning 30 to 203 (LACMADSVVT…SRVGFRLHTD (174 aa)) is the FAD-binding PCMH-type domain. Residue Arg-180 is part of the active site. Catalysis depends on Ser-258, which acts as the Proton donor. Residue Glu-356 is part of the active site.

Belongs to the MurB family. It depends on FAD as a cofactor.

The protein resides in the cytoplasm. The enzyme catalyses UDP-N-acetyl-alpha-D-muramate + NADP(+) = UDP-N-acetyl-3-O-(1-carboxyvinyl)-alpha-D-glucosamine + NADPH + H(+). Its pathway is cell wall biogenesis; peptidoglycan biosynthesis. Cell wall formation. This Psychrobacter cryohalolentis (strain ATCC BAA-1226 / DSM 17306 / VKM B-2378 / K5) protein is UDP-N-acetylenolpyruvoylglucosamine reductase.